Reading from the N-terminus, the 67-residue chain is Large ribosomal subunit protein uL29 (67 aa).

The protein belongs to the universal ribosomal protein uL29 family.

The protein is Large ribosomal subunit protein uL29 of Desulfitobacterium hafniense (strain Y51).